The chain runs to 657 residues: DNA-directed RNA polymerase III subunit RPC3 (657 aa).

The segment at 390 to 450 is disordered; sequence HSNQSLKRKQ…LDLDEDDSDP (61 aa). Over residues 428–448 the composition is skewed to acidic residues; the sequence is EESEEENEEGDANLDLDEDDS. The tract at residues 584–605 is leucine-zipper; sequence LTWNLARLISKLETLKEENATL.

It belongs to the RNA polymerase beta chain family. Component of the RNA polymerase III (Pol III) complex consisting of 17 subunits.

The protein resides in the nucleus. In terms of biological role, DNA-dependent RNA polymerase catalyzes the transcription of DNA into RNA using the four ribonucleoside triphosphates as substrates. Specific core component of RNA polymerase III which synthesizes small RNAs, such as 5S rRNA and tRNAs. This chain is DNA-directed RNA polymerase III subunit RPC3 (RPC82), found in Kluyveromyces lactis (strain ATCC 8585 / CBS 2359 / DSM 70799 / NBRC 1267 / NRRL Y-1140 / WM37) (Yeast).